The sequence spans 466 residues: Sucrose-6-phosphate hydrolase (466 aa).

Substrate contacts are provided by residues 38 to 41 (LLND), glutamine 57, 100 to 101 (YS), 159 to 160 (RD), and glutamate 218. Residue aspartate 41 is part of the active site.

It localises to the cytoplasm. It catalyses the reaction Hydrolysis of terminal non-reducing beta-D-fructofuranoside residues in beta-D-fructofuranosides.. The protein operates within glycan biosynthesis; sucrose metabolism. Functionally, hydrolyzes sucrose and sucrose-6P, but fails to hydrolyze any of the phosphorylated isomers of sucrose and other phospho-D-glucosides, including maltose-6'P and trehalose-6P. The polypeptide is Sucrose-6-phosphate hydrolase (scrB) (Klebsiella pneumoniae).